A 568-amino-acid chain; its full sequence is DNA ligase (568 aa).

ATP is bound at residue Glu249. Lys251 functions as the N6-AMP-lysine intermediate in the catalytic mechanism. Residues Arg256, Arg271, Glu301, Phe342, Arg418, and Lys424 each coordinate ATP.

Belongs to the ATP-dependent DNA ligase family. Requires Mg(2+) as cofactor.

The enzyme catalyses ATP + (deoxyribonucleotide)n-3'-hydroxyl + 5'-phospho-(deoxyribonucleotide)m = (deoxyribonucleotide)n+m + AMP + diphosphate.. DNA ligase that seals nicks in double-stranded DNA during DNA replication, DNA recombination and DNA repair. This chain is DNA ligase, found in Methanocella arvoryzae (strain DSM 22066 / NBRC 105507 / MRE50).